We begin with the raw amino-acid sequence, 338 residues long: Holliday junction branch migration complex subunit RuvB (338 aa).

Residues 1 to 179 (MTDLTTPIRT…FGIPVRLNFY (179 aa)) form a large ATPase domain (RuvB-L) region. ATP-binding residues include Leu18, Arg19, Gly60, Lys63, Thr64, Thr65, Arg169, Tyr179, and Arg216. Thr64 serves as a coordination point for Mg(2+). The tract at residues 180–250 (THAELEQVIG…AADAALNRLE (71 aa)) is small ATPAse domain (RuvB-S). A head domain (RuvB-H) region spans residues 253-338 (ALGLDAMDRR…AGSQDGLFDK (86 aa)). Residues Arg289, Arg308, and Arg313 each contribute to the DNA site.

This sequence belongs to the RuvB family. Homohexamer. Forms an RuvA(8)-RuvB(12)-Holliday junction (HJ) complex. HJ DNA is sandwiched between 2 RuvA tetramers; dsDNA enters through RuvA and exits via RuvB. An RuvB hexamer assembles on each DNA strand where it exits the tetramer. Each RuvB hexamer is contacted by two RuvA subunits (via domain III) on 2 adjacent RuvB subunits; this complex drives branch migration. In the full resolvosome a probable DNA-RuvA(4)-RuvB(12)-RuvC(2) complex forms which resolves the HJ.

The protein localises to the cytoplasm. It catalyses the reaction ATP + H2O = ADP + phosphate + H(+). The RuvA-RuvB-RuvC complex processes Holliday junction (HJ) DNA during genetic recombination and DNA repair, while the RuvA-RuvB complex plays an important role in the rescue of blocked DNA replication forks via replication fork reversal (RFR). RuvA specifically binds to HJ cruciform DNA, conferring on it an open structure. The RuvB hexamer acts as an ATP-dependent pump, pulling dsDNA into and through the RuvAB complex. RuvB forms 2 homohexamers on either side of HJ DNA bound by 1 or 2 RuvA tetramers; 4 subunits per hexamer contact DNA at a time. Coordinated motions by a converter formed by DNA-disengaged RuvB subunits stimulates ATP hydrolysis and nucleotide exchange. Immobilization of the converter enables RuvB to convert the ATP-contained energy into a lever motion, pulling 2 nucleotides of DNA out of the RuvA tetramer per ATP hydrolyzed, thus driving DNA branch migration. The RuvB motors rotate together with the DNA substrate, which together with the progressing nucleotide cycle form the mechanistic basis for DNA recombination by continuous HJ branch migration. Branch migration allows RuvC to scan DNA until it finds its consensus sequence, where it cleaves and resolves cruciform DNA. This is Holliday junction branch migration complex subunit RuvB from Sphingopyxis alaskensis (strain DSM 13593 / LMG 18877 / RB2256) (Sphingomonas alaskensis).